Consider the following 277-residue polypeptide: Putative phosphoenolpyruvate synthase regulatory protein (277 aa).

157 to 164 (GVSRSGKT) provides a ligand contact to ADP.

The protein belongs to the pyruvate, phosphate/water dikinase regulatory protein family. PSRP subfamily.

It carries out the reaction [pyruvate, water dikinase] + ADP = [pyruvate, water dikinase]-phosphate + AMP + H(+). The catalysed reaction is [pyruvate, water dikinase]-phosphate + phosphate + H(+) = [pyruvate, water dikinase] + diphosphate. In terms of biological role, bifunctional serine/threonine kinase and phosphorylase involved in the regulation of the phosphoenolpyruvate synthase (PEPS) by catalyzing its phosphorylation/dephosphorylation. This chain is Putative phosphoenolpyruvate synthase regulatory protein, found in Aromatoleum aromaticum (strain DSM 19018 / LMG 30748 / EbN1) (Azoarcus sp. (strain EbN1)).